Here is a 263-residue protein sequence, read N- to C-terminus: Type III pantothenate kinase (263 aa).

Asp-14 to Asn-21 is an ATP binding site. Position 115 to 118 (Gly-115 to Arg-118) interacts with substrate. Residue Asp-117 is the Proton acceptor of the active site. Residue Asp-137 coordinates K(+). ATP is bound at residue Thr-140. Thr-192 serves as a coordination point for substrate.

Belongs to the type III pantothenate kinase family. As to quaternary structure, homodimer. The cofactor is NH4(+). It depends on K(+) as a cofactor.

The protein localises to the cytoplasm. The enzyme catalyses (R)-pantothenate + ATP = (R)-4'-phosphopantothenate + ADP + H(+). Its pathway is cofactor biosynthesis; coenzyme A biosynthesis; CoA from (R)-pantothenate: step 1/5. In terms of biological role, catalyzes the phosphorylation of pantothenate (Pan), the first step in CoA biosynthesis. The polypeptide is Type III pantothenate kinase (Dehalococcoides mccartyi (strain ATCC BAA-2100 / JCM 16839 / KCTC 5957 / BAV1)).